The primary structure comprises 205 residues: Molybdenum cofactor guanylyltransferase (205 aa).

Residues 14–16 (LAG), K27, D77, and D107 each bind GTP. D107 serves as a coordination point for Mg(2+).

Belongs to the MobA family. Monomer. Mg(2+) is required as a cofactor.

The protein resides in the cytoplasm. It catalyses the reaction Mo-molybdopterin + GTP + H(+) = Mo-molybdopterin guanine dinucleotide + diphosphate. In terms of biological role, transfers a GMP moiety from GTP to Mo-molybdopterin (Mo-MPT) cofactor (Moco or molybdenum cofactor) to form Mo-molybdopterin guanine dinucleotide (Mo-MGD) cofactor. In Burkholderia lata (strain ATCC 17760 / DSM 23089 / LMG 22485 / NCIMB 9086 / R18194 / 383), this protein is Molybdenum cofactor guanylyltransferase.